Here is a 63-residue protein sequence, read N- to C-terminus: Large ribosomal subunit protein bL28 (63 aa).

Belongs to the bacterial ribosomal protein bL28 family.

The chain is Large ribosomal subunit protein bL28 from Sulfurihydrogenibium sp. (strain YO3AOP1).